Reading from the N-terminus, the 328-residue chain is Chlorate reductase subunit beta (328 aa).

4Fe-4S ferredoxin-type domains lie at 6–35 (VAYV…RDGR), 125–156 (NHSF…KRPE), and 158–187 (GIVV…FNLQ). Residues cysteine 15, cysteine 18, cysteine 21, cysteine 25, cysteine 134, cysteine 137, and cysteine 142 each contribute to the [4Fe-4S] cluster site. 3 residues coordinate [3Fe-4S] cluster: cysteine 146, cysteine 167, and cysteine 173. Cysteine 177, cysteine 194, cysteine 197, cysteine 209, and cysteine 213 together coordinate [4Fe-4S] cluster.

As to quaternary structure, heterotrimer of alpha, beta and gamma subunits. [3Fe-4S] cluster is required as a cofactor. The cofactor is [4Fe-4S] cluster.

It localises to the periplasm. In terms of biological role, electron transfer subunit of the terminal reductase during anaerobic growth on chlorate. This chain is Chlorate reductase subunit beta (clrB), found in Ideonella dechloratans.